A 623-amino-acid polypeptide reads, in one-letter code: MTSGRSTRVTMFESQASMGEPSNEDLSSTDDVRTDAPLAYAKYVTFDQSLPLERGGELPEIRCCYETWGTLNDDGSNAVLVCHAVSGDSHAARHDEDDQPGWWDGLIGPGLPIDTDRLFVVCPNVLGGCRGSTGPGDADPTSPDGKPYGANFPRITIGDIVEAQKLLADHLGIRQWRAVVGGSLGGHQVLQWINRYPDAAKTCVAIATSPRLNSQALGFDVIARNAIQTDPHYAGGQYYDKDQRPDTGLAIARMLGHITYLSVEAMEAKFDPDRHDPRQIASQFEQRFSIGSYLAHQGQKFTTRFDANSYVTLSMAMDLFDLGGTRLKLMETFDEATCDFLLISFSSDWLFPPAQSREIVNALTALDKRVTYAEITTNAGHDAFLIAKDIATYGPLIRERLRDTETHPAVPSDITLNVDEESILEIIPAGSSVLDLGCGNGQLLAAIRDRHRTPGPPTTEHRLMGVEVAQENLLATAMRGIDVIDYDLNHGLPAFIDDQFDYVILNATLQAVENVVELLNEMLRVGRHAIISFPNFAYRQLRDHYVTHGRSPKAPGEFDFDWHNTPNRRFPTIADVRDLLGQLNVVIDEEVFWDVDQGQRIEPDNDPNLNADTAVIAFHRENR.

The span at 1-17 (MTSGRSTRVTMFESQAS) shows a compositional bias: polar residues. Positions 1 to 30 (MTSGRSTRVTMFESQASMGEPSNEDLSSTD) are disordered. Residues 77-385 (NAVLVCHAVS…TTNAGHDAFL (309 aa)) form the AB hydrolase-1 domain. Catalysis depends on serine 183, which acts as the Nucleophile. Arginine 253 lines the substrate pocket. Active-site residues include aspartate 348 and histidine 381. Aspartate 382 contributes to the substrate binding site. Positions 417-619 (NVDEESILEI…NADTAVIAFH (203 aa)) are metW.

The protein in the N-terminal section; belongs to the AB hydrolase superfamily. MetX family. It in the C-terminal section; belongs to the MetW family. As to quaternary structure, homodimer.

It localises to the cytoplasm. It carries out the reaction L-homoserine + acetyl-CoA = O-acetyl-L-homoserine + CoA. Its pathway is amino-acid biosynthesis; L-methionine biosynthesis via de novo pathway; O-acetyl-L-homoserine from L-homoserine: step 1/1. Transfers an acetyl group from acetyl-CoA to L-homoserine, forming acetyl-L-homoserine. The polypeptide is Bifunctional methionine biosynthesis protein MetXA/MetW (Rhodopirellula baltica (strain DSM 10527 / NCIMB 13988 / SH1)).